Reading from the N-terminus, the 265-residue chain is Tryptophan synthase alpha chain (265 aa).

Active-site proton acceptor residues include glutamate 49 and glutamate 60.

This sequence belongs to the TrpA family. Tetramer of two alpha and two beta chains.

The enzyme catalyses (1S,2R)-1-C-(indol-3-yl)glycerol 3-phosphate + L-serine = D-glyceraldehyde 3-phosphate + L-tryptophan + H2O. The protein operates within amino-acid biosynthesis; L-tryptophan biosynthesis; L-tryptophan from chorismate: step 5/5. The alpha subunit is responsible for the aldol cleavage of indoleglycerol phosphate to indole and glyceraldehyde 3-phosphate. The chain is Tryptophan synthase alpha chain from Herminiimonas arsenicoxydans.